Reading from the N-terminus, the 364-residue chain is 3-dehydroquinate synthase (364 aa).

NAD(+)-binding positions include 73 to 78 (DGEQNK), 107 to 111 (GVIGD), 131 to 132 (TT), K144, K153, and 171 to 174 (CLCT). The Zn(2+) site is built by E186, H249, and H266.

Belongs to the sugar phosphate cyclases superfamily. Dehydroquinate synthase family. The cofactor is NAD(+). Co(2+) serves as cofactor. Zn(2+) is required as a cofactor.

The protein localises to the cytoplasm. It catalyses the reaction 7-phospho-2-dehydro-3-deoxy-D-arabino-heptonate = 3-dehydroquinate + phosphate. It functions in the pathway metabolic intermediate biosynthesis; chorismate biosynthesis; chorismate from D-erythrose 4-phosphate and phosphoenolpyruvate: step 2/7. In terms of biological role, catalyzes the conversion of 3-deoxy-D-arabino-heptulosonate 7-phosphate (DAHP) to dehydroquinate (DHQ). The chain is 3-dehydroquinate synthase from Blochmanniella floridana.